The primary structure comprises 634 residues: DNA-directed RNA polymerase subunit gamma (634 aa).

Positions 74, 76, 89, and 92 each coordinate Zn(2+). Positions 471, 473, and 475 each coordinate Mg(2+).

Belongs to the RNA polymerase beta' chain family. RpoC1 subfamily. In terms of assembly, in cyanobacteria the RNAP catalytic core is composed of 2 alpha, 1 beta, 1 beta', 1 gamma and 1 omega subunit. When a sigma factor is associated with the core the holoenzyme is formed, which can initiate transcription. Mg(2+) is required as a cofactor. Zn(2+) serves as cofactor.

It catalyses the reaction RNA(n) + a ribonucleoside 5'-triphosphate = RNA(n+1) + diphosphate. DNA-dependent RNA polymerase catalyzes the transcription of DNA into RNA using the four ribonucleoside triphosphates as substrates. This Prochlorococcus marinus (strain MIT 9215) protein is DNA-directed RNA polymerase subunit gamma.